A 350-amino-acid chain; its full sequence is Blue-sensitive opsin (350 aa).

The Extracellular portion of the chain corresponds to 1–36 (MNGTEGPNFYVPMSNATGVVRSPFEYPQYYLAEPWA). 2 N-linked (GlcNAc...) asparagine glycosylation sites follow: asparagine 2 and asparagine 15. The helical transmembrane segment at 37–61 (FSILAAYMFFLIITGFPINFLTLYV) threads the bilayer. Residues 62-73 (TIEHKKLRTPLN) are Cytoplasmic-facing. Residues 74–98 (YILLNLAVADLFMVFGGFTTTMYTS) form a helical membrane-spanning segment. The Extracellular segment spans residues 99 to 113 (MHGYFVFGETGCNLE). Cysteine 110 and cysteine 187 form a disulfide bridge. The chain crosses the membrane as a helical span at residues 114–133 (GYFATLGGEISLWSLVVLAI). Topologically, residues 134–152 (ERWVVVCKPISNFRFGENH) are cytoplasmic. A helical membrane pass occupies residues 153-176 (AIMGLTLTWVMANACAMPPLFGWS). Over 177–202 (RYIPEGLQCSCGIDYYTLKPEVNNES) the chain is Extracellular. An N-linked (GlcNAc...) asparagine glycan is attached at asparagine 200. A helical transmembrane segment spans residues 203-230 (FVIYMFLVHFTIPLTIISFCYGRLVCAV). Residues 231 to 252 (KEAAAQQQESETTQRAEREVTR) lie on the Cytoplasmic side of the membrane. The helical transmembrane segment at 253–276 (MVVIMVISFLVCWIPYASVAWYIF) threads the bilayer. At 277 to 284 (THQGSTFG) the chain is on the extracellular side. The helical transmembrane segment at 285–309 (PIFMTVPSFFAKSSSIYNPMIYICM) threads the bilayer. Lysine 296 carries the post-translational modification N6-(retinylidene)lysine. The Cytoplasmic segment spans residues 310-350 (NKQFRNCMITTLFCGKNPFEGEEEGSTTKTEASAVSSVSPA). Positions 330–350 (GEEEGSTTKTEASAVSSVSPA) are disordered.

Belongs to the G-protein coupled receptor 1 family. Opsin subfamily. Post-translationally, phosphorylated on some or all of the serine and threonine residues present in the C-terminal region. In terms of tissue distribution, rod shaped photoreceptor cells which mediates vision in dim light.

It is found in the membrane. Visual pigments are the light-absorbing molecules that mediate vision. They consist of an apoprotein, opsin, covalently linked to cis-retinal. The polypeptide is Blue-sensitive opsin (Conger conger (Conger eel)).